A 460-amino-acid polypeptide reads, in one-letter code: Probable serine/threonine-protein kinase kinase DDB_G0280557 (460 aa).

One can recognise a Protein kinase domain in the interval 102–416; it reads INLKSITDCG…IDQLLAHKYF (315 aa). Residues lysine 131 and 154-162 contribute to the ATP site; that span reads QRHFQQHPL. The Proton acceptor role is filled by aspartate 250.

This sequence belongs to the protein kinase superfamily. CMGC Ser/Thr protein kinase family. MAP kinase subfamily.

It catalyses the reaction L-seryl-[protein] + ATP = O-phospho-L-seryl-[protein] + ADP + H(+). It carries out the reaction L-threonyl-[protein] + ATP = O-phospho-L-threonyl-[protein] + ADP + H(+). The sequence is that of Probable serine/threonine-protein kinase kinase DDB_G0280557 from Dictyostelium discoideum (Social amoeba).